The following is a 220-amino-acid chain: Cytidylate kinase (220 aa).

Position 10–18 (10–18 (GPASSGKST)) interacts with ATP.

Belongs to the cytidylate kinase family. Type 1 subfamily.

It localises to the cytoplasm. It catalyses the reaction CMP + ATP = CDP + ADP. It carries out the reaction dCMP + ATP = dCDP + ADP. This is Cytidylate kinase from Lactococcus lactis subsp. cremoris (strain SK11).